The sequence spans 239 residues: Elongation factor Ts (239 aa).

The segment at Thr82–Val85 is involved in Mg(2+) ion dislocation from EF-Tu. The interval Ala213–Lys239 is disordered. Over residues Ala229–Lys239 the composition is skewed to basic residues.

It belongs to the EF-Ts family.

The protein resides in the cytoplasm. In terms of biological role, associates with the EF-Tu.GDP complex and induces the exchange of GDP to GTP. It remains bound to the aminoacyl-tRNA.EF-Tu.GTP complex up to the GTP hydrolysis stage on the ribosome. In Acaryochloris marina (strain MBIC 11017), this protein is Elongation factor Ts.